We begin with the raw amino-acid sequence, 290 residues long: Protein MGF 110-9L (290 aa).

Transmembrane regions (helical) follow at residues 1–19, 128–148, and 163–183; these read MKVIVLLLVLAVMQPVIQS, TENIKHTCLCMIATIALIGYI, and LLIFLGLYVLLGILMTNIIMN. N-linked (GlcNAc...) asparagine; by host glycosylation is found at Asn-242 and Asn-267.

It belongs to the asfivirus MGF 110 family.

Its subcellular location is the host membrane. Functionally, plays a role in virus cell tropism, and may be required for efficient virus replication in macrophages. The sequence is that of Protein MGF 110-9L from Ornithodoros (relapsing fever ticks).